The primary structure comprises 389 residues: Phospho-N-acetylmuramoyl-pentapeptide-transferase (389 aa).

The next 10 membrane-spanning stretches (helical) occupy residues 25 to 45, 73 to 93, 97 to 117, 135 to 155, 190 to 210, 222 to 242, 258 to 278, 286 to 306, 311 to 331, and 366 to 386; these read RAVM…PWVI, TMGG…WGDL, FIWI…VDDY, FWQS…VSEA, ISYP…IVGA, GLVI…AYVM, GAGE…AFLW, VFMG…VAVI, IVLF…MLQV, and QVVV…LSTL.

It belongs to the glycosyltransferase 4 family. MraY subfamily. The cofactor is Mg(2+).

It localises to the cell inner membrane. It carries out the reaction UDP-N-acetyl-alpha-D-muramoyl-L-alanyl-gamma-D-glutamyl-meso-2,6-diaminopimeloyl-D-alanyl-D-alanine + di-trans,octa-cis-undecaprenyl phosphate = di-trans,octa-cis-undecaprenyl diphospho-N-acetyl-alpha-D-muramoyl-L-alanyl-D-glutamyl-meso-2,6-diaminopimeloyl-D-alanyl-D-alanine + UMP. It functions in the pathway cell wall biogenesis; peptidoglycan biosynthesis. In terms of biological role, catalyzes the initial step of the lipid cycle reactions in the biosynthesis of the cell wall peptidoglycan: transfers peptidoglycan precursor phospho-MurNAc-pentapeptide from UDP-MurNAc-pentapeptide onto the lipid carrier undecaprenyl phosphate, yielding undecaprenyl-pyrophosphoryl-MurNAc-pentapeptide, known as lipid I. The chain is Phospho-N-acetylmuramoyl-pentapeptide-transferase from Burkholderia multivorans (strain ATCC 17616 / 249).